The primary structure comprises 465 residues: RuvB-like helicase 2 (465 aa).

72–79 (GPPSTGKT) lines the ATP pocket.

This sequence belongs to the RuvB family. May form heterododecamers with RVB1. Component of the SWR1 chromatin remodeling complex, the INO80 chromatin remodeling complex, and of the R2TP complex. Interacts with dil1.

It is found in the nucleus. The catalysed reaction is ATP + H2O = ADP + phosphate + H(+). Functionally, DNA helicase which participates in several chromatin remodeling complexes, including the SWR1 and the INO80 complexes. The SWR1 complex mediates the ATP-dependent exchange of histone H2A for the H2A variant HZT1 leading to transcriptional regulation of selected genes by chromatin remodeling. The INO80 complex remodels chromatin by shifting nucleosomes and is involved in DNA repair. Also involved in pre-rRNA processing. The chain is RuvB-like helicase 2 (rvb2) from Schizosaccharomyces pombe (strain 972 / ATCC 24843) (Fission yeast).